Consider the following 218-residue polypeptide: Peptide methionine sulfoxide reductase MsrA (218 aa).

The tract at residues 1-28 (MSFLDSYRKKTQMPSTDEALPGRAQPIP) is disordered. The active site involves Cys57.

It belongs to the MsrA Met sulfoxide reductase family.

It carries out the reaction L-methionyl-[protein] + [thioredoxin]-disulfide + H2O = L-methionyl-(S)-S-oxide-[protein] + [thioredoxin]-dithiol. The enzyme catalyses [thioredoxin]-disulfide + L-methionine + H2O = L-methionine (S)-S-oxide + [thioredoxin]-dithiol. Has an important function as a repair enzyme for proteins that have been inactivated by oxidation. Catalyzes the reversible oxidation-reduction of methionine sulfoxide in proteins to methionine. This Brucella anthropi (strain ATCC 49188 / DSM 6882 / CCUG 24695 / JCM 21032 / LMG 3331 / NBRC 15819 / NCTC 12168 / Alc 37) (Ochrobactrum anthropi) protein is Peptide methionine sulfoxide reductase MsrA.